The chain runs to 222 residues: Probable pyridoxal 5'-phosphate synthase subunit SNO2 (222 aa).

58-60 (GES) contributes to the L-glutamine binding site. C91 acts as the Nucleophile in catalysis. L-glutamine is bound by residues R120 and 151-152 (IR). Catalysis depends on charge relay system residues H197 and E199.

Belongs to the glutaminase PdxT/SNO family.

The catalysed reaction is aldehydo-D-ribose 5-phosphate + D-glyceraldehyde 3-phosphate + L-glutamine = pyridoxal 5'-phosphate + L-glutamate + phosphate + 3 H2O + H(+). It catalyses the reaction L-glutamine + H2O = L-glutamate + NH4(+). Its pathway is cofactor biosynthesis; pyridoxal 5'-phosphate biosynthesis. Functionally, catalyzes the hydrolysis of glutamine to glutamate and ammonia as part of the biosynthesis of pyridoxal 5'-phosphate. The resulting ammonia molecule is channeled to the active site of a SNZ isoform. This Saccharomyces cerevisiae (strain ATCC 204508 / S288c) (Baker's yeast) protein is Probable pyridoxal 5'-phosphate synthase subunit SNO2 (SNO2).